Here is a 133-residue protein sequence, read N- to C-terminus: Small ribosomal subunit protein uS8c (133 aa).

It belongs to the universal ribosomal protein uS8 family. In terms of assembly, part of the 30S ribosomal subunit.

It localises to the plastid. The protein localises to the chloroplast. Its function is as follows. One of the primary rRNA binding proteins, it binds directly to 16S rRNA central domain where it helps coordinate assembly of the platform of the 30S subunit. This Pyropia yezoensis (Susabi-nori) protein is Small ribosomal subunit protein uS8c (rps8).